The following is a 439-amino-acid chain: Tol-Pal system protein TolB (439 aa).

A signal peptide spans 1–22 (MKKPLRWLAALTVLLLPLSALA).

The protein belongs to the TolB family. The Tol-Pal system is composed of five core proteins: the inner membrane proteins TolA, TolQ and TolR, the periplasmic protein TolB and the outer membrane protein Pal. They form a network linking the inner and outer membranes and the peptidoglycan layer.

The protein resides in the periplasm. Functionally, part of the Tol-Pal system, which plays a role in outer membrane invagination during cell division and is important for maintaining outer membrane integrity. The chain is Tol-Pal system protein TolB from Xanthomonas oryzae pv. oryzae (strain PXO99A).